We begin with the raw amino-acid sequence, 238 residues long: Leucine-rich repeat-containing protein 57 (238 aa).

LRR repeat units lie at residues 10–36 (LETSQKTGVFQLTGKGLTEFPEDLQKL), 37–62 (TANLRTVDLSNNKIEELPAFIGSFQH), 64–82 (KSFTISCNKLTSLPNDIGK), 83–106 (LKKLETLILNGNQLKQLPSSIGQL), 108–128 (SLRTLSLSGNQFKEFPSGLGT), 129–152 (LRQLDVLDLSKNQIRVVPAEVAEL), 154–173 (AIEINLNQNQISSVTQEVSR), and 174–199 (TPRLKVLRLEENCLELSSIPLSILTD).

The polypeptide is Leucine-rich repeat-containing protein 57 (lrrc57) (Danio rerio (Zebrafish)).